The sequence spans 614 residues: MASTVDSNFFSSVPALHSNLGLLSPDQIELAKILLENGQSHLFQQWPELGVDDKEKLAFFDQIARLNSSYPGGLAAYIKTAKELLADSKVGKNPYDGFSPSVPSGENLTFGTDNFIEMEKRGVVEARNAAFVLVAGGLGERLGYNGIKVALPRETTTGTCFLQHYIESILALQEASNKIDSDGSERDIPFIIMTSDDTHSRTLDLLELNSYFGMKPTQVHLLKQEKVACLDDNDARLALDPHNKYSIQTKPHGHGDVHSLLYSSGLLHKWLEAGLKWVLFFQDTNGLLFNAIPASLGVSATKQYHVNSLAVPRKAKEAIGGISKLTHVDGRSMVINVEYNQLDPLLRASGFPDGDVNCETGFSPFPGNINQLILELGPYKDELQKTGGAIKEFVNPKYKDSTKTAFKSSTRLECMMQDYPKTLPPTARVGFTVMDIWLAYAPVKNNPEDAAKVPKGNPYHSATSGEMAIYRANSLILQKAGVKVEEPVKQVLNGQEVEVWSRITWKPKWGMIFSDIKKKVSGNCEVSQRSTMAIKGRNVFIKDLSLDGALIVDSIDDAEVKLGGLIKNNGWTMESVDYKDTSVPEEIRIRGFRFNKVEQLEKKLTQPGKFSVED.

At Ala2 the chain carries N-acetylalanine.

It belongs to the USP family. Mg(2+) serves as cofactor. Mn(2+) is required as a cofactor. As to expression, ubiquitous, but most abundant in rosette leaves, inflorescences, stems, stamens and pollen.

It catalyses the reaction a monosaccharide 1-phosphate + UTP + H(+) = a UDP-monosaccharide + diphosphate. In terms of biological role, required for the synthesis of the intine, the pectocellulosic inner wall of developing pollen. May function as the terminal enzyme of the myo-inositol oxidation (MIO) pathway. May also play a role in the salvage pathway for synthesis of nucleotide sugars. Can use a wide range of substrates including glucose-1-phosphate, galactose-1-phosphate, xylose-1-phosphate, arabinose-1-phosphate and glucuronate-1-phosphate. The chain is UDP-sugar pyrophosphorylase (USP) from Arabidopsis thaliana (Mouse-ear cress).